The sequence spans 61 residues: Large ribosomal subunit protein uL30 (61 aa).

Belongs to the universal ribosomal protein uL30 family. Part of the 50S ribosomal subunit.

The chain is Large ribosomal subunit protein uL30 from Nitrosomonas eutropha (strain DSM 101675 / C91 / Nm57).